Consider the following 204-residue polypeptide: dTTP/UTP pyrophosphatase (204 aa).

D68 (proton acceptor) is an active-site residue.

This sequence belongs to the Maf family. YhdE subfamily. A divalent metal cation serves as cofactor.

The protein resides in the cytoplasm. The enzyme catalyses dTTP + H2O = dTMP + diphosphate + H(+). The catalysed reaction is UTP + H2O = UMP + diphosphate + H(+). In terms of biological role, nucleoside triphosphate pyrophosphatase that hydrolyzes dTTP and UTP. May have a dual role in cell division arrest and in preventing the incorporation of modified nucleotides into cellular nucleic acids. The protein is dTTP/UTP pyrophosphatase of Thermotoga maritima (strain ATCC 43589 / DSM 3109 / JCM 10099 / NBRC 100826 / MSB8).